The sequence spans 302 residues: GTPase Era (302 aa).

An Era-type G domain is found at 10–178; it reads RCGYVAIVGR…EAQIAKHLPE (169 aa). A G1 region spans residues 18 to 25; the sequence is GRPNVGKS. Position 18–25 (18–25) interacts with GTP; it reads GRPNVGKS. The tract at residues 44–48 is G2; the sequence is QTTRH. Residues 65 to 68 are G3; sequence DTPG. GTP contacts are provided by residues 65 to 69 and 127 to 130; these read DTPGM and NKTD. The interval 127 to 130 is G4; the sequence is NKTD. The interval 157–159 is G5; that stretch reads ISA. The 85-residue stretch at 201 to 285 folds into the KH type-2 domain; that stretch reads VREKIMRQLG…MLNLWVKVKG (85 aa).

The protein belongs to the TRAFAC class TrmE-Era-EngA-EngB-Septin-like GTPase superfamily. Era GTPase family. Monomer.

The protein localises to the cytoplasm. The protein resides in the cell inner membrane. An essential GTPase that binds both GDP and GTP, with rapid nucleotide exchange. Plays a role in 16S rRNA processing and 30S ribosomal subunit biogenesis and possibly also in cell cycle regulation and energy metabolism. The polypeptide is GTPase Era (Pseudomonas putida (strain ATCC 47054 / DSM 6125 / CFBP 8728 / NCIMB 11950 / KT2440)).